Reading from the N-terminus, the 500-residue chain is Protein psiE (500 aa).

Positions 1 to 18 (MKLISVLITFLLATVIYS) are cleaved as a signal peptide. An N-linked (GlcNAc...) asparagine glycan is attached at N59. The 143-residue stretch at 114–256 (TYDTTRKIYV…KDYCGVCQGD (143 aa)) folds into the PA14 domain. N-linked (GlcNAc...) asparagine glycosylation is found at N314, N341, N366, N420, and N469.

This sequence belongs to the prespore-cell-inducing factor family.

It localises to the secreted. The sequence is that of Protein psiE (psiE) from Dictyostelium discoideum (Social amoeba).